The following is a 528-amino-acid chain: Probable rhamnogalacturonate lyase A (528 aa).

The N-terminal stretch at 1-20 (MFFQTGLLLSLSLWTKVAYA) is a signal peptide. Intrachain disulfides connect C50–C93 and C184–C193. N56 carries N-linked (GlcNAc...) asparagine glycosylation. An N-linked (GlcNAc...) asparagine glycan is attached at N351.

Belongs to the polysaccharide lyase 4 family.

The protein resides in the secreted. The catalysed reaction is Endotype eliminative cleavage of L-alpha-rhamnopyranosyl-(1-&gt;4)-alpha-D-galactopyranosyluronic acid bonds of rhamnogalacturonan I domains in ramified hairy regions of pectin leaving L-rhamnopyranose at the reducing end and 4-deoxy-4,5-unsaturated D-galactopyranosyluronic acid at the non-reducing end.. In terms of biological role, pectinolytic enzymes consist of four classes of enzymes: pectin lyase, polygalacturonase, pectin methylesterase and rhamnogalacturonase. Degrades the rhamnogalacturonan I (RG-I) backbone of pectin. Active against linseed rhamnogalacturonan. The protein is Probable rhamnogalacturonate lyase A (rglA) of Aspergillus clavatus (strain ATCC 1007 / CBS 513.65 / DSM 816 / NCTC 3887 / NRRL 1 / QM 1276 / 107).